The sequence spans 798 residues: Transferrin receptor protein 2 (798 aa).

The Cytoplasmic portion of the chain corresponds to 1–81; it reads MEQRWGLLRK…WAAAGRKAAP (81 aa). The Endocytosis signal signature appears at 23–26; sequence YRRV. The disordered stretch occupies residues 25-44; it reads RVEGPQLENLEEEDREEGEE. Acidic residues predominate over residues 33–44; that stretch reads NLEEEDREEGEE. The chain crosses the membrane as a helical; Signal-anchor for type II membrane protein span at residues 82–102; that stretch reads YLVLTTLLIFTGAFLLGYVAF. The Extracellular portion of the chain corresponds to 103-798; that stretch reads RGSCQACGDS…GDVWNIDNNF (696 aa). N235, N334, and N535 each carry an N-linked (GlcNAc...) asparagine glycan.

The protein belongs to the peptidase M28 family. M28B subfamily. In terms of assembly, homodimer.

The protein localises to the cell membrane. In terms of biological role, mediates cellular uptake of transferrin-bound iron in a non-iron dependent manner. May be involved in iron metabolism, hepatocyte function and erythrocyte differentiation. This chain is Transferrin receptor protein 2 (Tfr2), found in Rattus norvegicus (Rat).